Consider the following 79-residue polypeptide: Cytochrome c oxidase subunit 7A1, mitochondrial (79 aa).

A mitochondrion-targeting transit peptide spans 1–21 (MQALRVSQALIRSFSSTARNR). Topologically, residues 22–46 (FQNRVREKQKLFQEDNDIPLYLKGG) are mitochondrial matrix. The chain crosses the membrane as a helical span at residues 47 to 75 (IVDNILYRVTMTLCLGGTVYSLYSLGWAS). The Mitochondrial intermembrane segment spans residues 76 to 79 (FPRN).

This sequence belongs to the cytochrome c oxidase VIIa family. Component of the complex IV (CIV, cytochrome c oxidase), a multisubunit enzyme composed of 14 subunits. The complex is composed of a catalytic core of 3 subunits MT-CO1, MT-CO2 and MT-CO3, encoded in the mitochondrial DNA, and 11 supernumerary subunits COX4I1 (or COX4I2), COX5A, COX5B, COX6A2 (or COX6A1), COX6B1 (or COX6B2), COX6C, COX7A1 (or COX7A2), COX7B, COX7C, COX8B and NDUFA4, which are encoded in the nuclear genome. The complex exists as a monomer or a dimer and forms supercomplexes (SCs) in the inner mitochondrial membrane with NADH-ubiquinone oxidoreductase (complex I, CI) and ubiquinol-cytochrome c oxidoreductase (cytochrome b-c1 complex, complex III, CIII), resulting in different assemblies (supercomplex SCI(1)III(2)IV(1) and megacomplex MCI(2)III(2)IV(2)).

It localises to the mitochondrion inner membrane. The protein operates within energy metabolism; oxidative phosphorylation. Its function is as follows. Component of the mitochondrial respiratory complex IV (CIV, also named cytochrome c oxidase complex), the last enzyme in the mitochondrial electron transport chain which drives oxidative phosphorylation. The CIV complex is the component of the respiratory chain that catalyzes the reduction of oxygen to water. Acts as an assembly factor that specifically drives the homodimerization of CIV complexes, mediating the formation of mitochondrial respiratory supercomplexes (respirasomes) containing two CIV: supercomplxes with two molecules of CIV show improved activity. Despite being highly expressed in brown adipose tissue, not required for thermogenesis. This chain is Cytochrome c oxidase subunit 7A1, mitochondrial (COX7A1), found in Homo sapiens (Human).